Consider the following 202-residue polypeptide: Peptidyl-tRNA hydrolase (202 aa).

A tRNA-binding site is contributed by Tyr14. Catalysis depends on His19, which acts as the Proton acceptor. Tyr64, Asn66, and Asn112 together coordinate tRNA.

It belongs to the PTH family. As to quaternary structure, monomer.

Its subcellular location is the cytoplasm. It carries out the reaction an N-acyl-L-alpha-aminoacyl-tRNA + H2O = an N-acyl-L-amino acid + a tRNA + H(+). In terms of biological role, hydrolyzes ribosome-free peptidyl-tRNAs (with 1 or more amino acids incorporated), which drop off the ribosome during protein synthesis, or as a result of ribosome stalling. Functionally, catalyzes the release of premature peptidyl moieties from peptidyl-tRNA molecules trapped in stalled 50S ribosomal subunits, and thus maintains levels of free tRNAs and 50S ribosomes. This chain is Peptidyl-tRNA hydrolase, found in Xanthobacter autotrophicus (strain ATCC BAA-1158 / Py2).